The following is a 176-amino-acid chain: Ribosome maturation factor RimM (176 aa).

The PRC barrel domain maps to 97–176 (DSEFYHRDLI…QILVDWDPDF (80 aa)).

The protein belongs to the RimM family. As to quaternary structure, binds ribosomal protein uS19.

The protein localises to the cytoplasm. Its function is as follows. An accessory protein needed during the final step in the assembly of 30S ribosomal subunit, possibly for assembly of the head region. Essential for efficient processing of 16S rRNA. May be needed both before and after RbfA during the maturation of 16S rRNA. It has affinity for free ribosomal 30S subunits but not for 70S ribosomes. This Shewanella frigidimarina (strain NCIMB 400) protein is Ribosome maturation factor RimM.